Reading from the N-terminus, the 56-residue chain is Small ribosomal subunit protein uS14 (56 aa).

4 residues coordinate Zn(2+): Cys-21, Cys-24, Cys-39, and Cys-42.

Belongs to the universal ribosomal protein uS14 family. As to quaternary structure, component of the 40S small ribosomal subunit. Zn(2+) is required as a cofactor.

It localises to the cytoplasm. The protein localises to the cytosol. It is found in the rough endoplasmic reticulum. The protein is Small ribosomal subunit protein uS14 (RpS29) of Spodoptera frugiperda (Fall armyworm).